Consider the following 113-residue polypeptide: Hydrogenase maturation factor HypA (113 aa).

Residue H2 coordinates Ni(2+). Positions 73, 76, 89, and 92 each coordinate Zn(2+).

Belongs to the HypA/HybF family.

In terms of biological role, involved in the maturation of [NiFe] hydrogenases. Required for nickel insertion into the metal center of the hydrogenase. The polypeptide is Hydrogenase maturation factor HypA (Legionella pneumophila (strain Paris)).